The primary structure comprises 857 residues: Leucine--tRNA ligase (857 aa).

A 'HIGH' region motif is present at residues 42–52 (PYPSGRLHMGH). Positions 617–621 (KMSKS) match the 'KMSKS' region motif. Lys-620 provides a ligand contact to ATP.

This sequence belongs to the class-I aminoacyl-tRNA synthetase family.

The protein resides in the cytoplasm. The enzyme catalyses tRNA(Leu) + L-leucine + ATP = L-leucyl-tRNA(Leu) + AMP + diphosphate. The chain is Leucine--tRNA ligase from Vibrio parahaemolyticus serotype O3:K6 (strain RIMD 2210633).